The sequence spans 206 residues: MGHRDVATVGLGGPVGSGKTAMVKRLVPRLDAAGYNVGVIANDIMTQEDADRLRESFEGILPPDLVEGVETGACPHTGIREDPSMNIAAIDEFTESYPDLDVVLLESGGDNLAATFNPELADYFIFVISVAEGDDIPRKRGPGVTQADLLVVNKTDLAPHVDADLEVMRRDAETVRGDAPTCFTDCKAEEGIDGVVDHIEEGVLFA.

13 to 20 is a GTP binding site; that stretch reads GPVGSGKT.

This sequence belongs to the SIMIBI class G3E GTPase family. UreG subfamily. As to quaternary structure, homodimer. UreD, UreF and UreG form a complex that acts as a GTP-hydrolysis-dependent molecular chaperone, activating the urease apoprotein by helping to assemble the nickel containing metallocenter of UreC. The UreE protein probably delivers the nickel.

It is found in the cytoplasm. In terms of biological role, facilitates the functional incorporation of the urease nickel metallocenter. This process requires GTP hydrolysis, probably effectuated by UreG. This chain is Urease accessory protein UreG, found in Natronomonas pharaonis (strain ATCC 35678 / DSM 2160 / CIP 103997 / JCM 8858 / NBRC 14720 / NCIMB 2260 / Gabara) (Halobacterium pharaonis).